The chain runs to 597 residues: tRNA uridine 5-carboxymethylaminomethyl modification enzyme MnmG (597 aa).

11 to 16 contributes to the FAD binding site; that stretch reads GAGHAG. Residue 275-289 coordinates NAD(+); that stretch reads SPRYCPSIEEKIERY.

Belongs to the MnmG family. In terms of assembly, homodimer. Heterotetramer of two MnmE and two MnmG subunits. Requires FAD as cofactor.

It is found in the cytoplasm. In terms of biological role, NAD-binding protein involved in the addition of a carboxymethylaminomethyl (cmnm) group at the wobble position (U34) of certain tRNAs, forming tRNA-cmnm(5)s(2)U34. This chain is tRNA uridine 5-carboxymethylaminomethyl modification enzyme MnmG, found in Endomicrobium trichonymphae.